A 372-amino-acid chain; its full sequence is Glutamate 5-kinase (372 aa).

Lysine 14 is a binding site for ATP. Residues serine 54, aspartate 141, and asparagine 153 each contribute to the substrate site. ATP is bound at residue 173–174 (TD). Positions 280-358 (RGTLVLDAGA…DAIESILGYS (79 aa)) constitute a PUA domain.

Belongs to the glutamate 5-kinase family.

It is found in the cytoplasm. It carries out the reaction L-glutamate + ATP = L-glutamyl 5-phosphate + ADP. The protein operates within amino-acid biosynthesis; L-proline biosynthesis; L-glutamate 5-semialdehyde from L-glutamate: step 1/2. Functionally, catalyzes the transfer of a phosphate group to glutamate to form L-glutamate 5-phosphate. This chain is Glutamate 5-kinase, found in Pseudomonas putida (strain GB-1).